The primary structure comprises 179 residues: MVALYDYYKNSISKKLMLNFNYSSVMQVPKIDKITLNIGVGIATIDKKNLDFAISDLTKISGQKPLITKARKSIASFKIRKGYPIGCKVTLRGNRKWDFFERLIFIVIPRIRDFRGFSNKSFDGKGNYSIGIKEQIIFPEIDFDKIDRIRGINITITTTALSDREGYALLSAFNFPFRT.

This sequence belongs to the universal ribosomal protein uL5 family. Part of the 50S ribosomal subunit; part of the 5S rRNA/L5/L18/L25 subcomplex. Contacts the 5S rRNA and the P site tRNA. Forms a bridge to the 30S subunit in the 70S ribosome.

This is one of the proteins that bind and probably mediate the attachment of the 5S RNA into the large ribosomal subunit, where it forms part of the central protuberance. In the 70S ribosome it contacts protein S13 of the 30S subunit (bridge B1b), connecting the 2 subunits; this bridge is implicated in subunit movement. Contacts the P site tRNA; the 5S rRNA and some of its associated proteins might help stabilize positioning of ribosome-bound tRNAs. This Buchnera aphidicola subsp. Baizongia pistaciae (strain Bp) protein is Large ribosomal subunit protein uL5.